Consider the following 131-residue polypeptide: Cruxhalorhodopsin-1 (131 aa).

A helical membrane pass occupies residues 1 to 11 (PMILLALGLLA). Residues 12-14 (DTD) lie on the Cytoplasmic side of the membrane. Residues 15–38 (IASLFTAITMDIGMCVTGLAAALI) traverse the membrane as a helical segment. Residues 39–41 (TSS) are Extracellular-facing. A helical membrane pass occupies residues 42–64 (HLLRWVFYGISCAFFVAVLYVLL). Topologically, residues 65-76 (VQWPADAEAAGT) are cytoplasmic. The helical transmembrane segment at 77–100 (SEIFGTLKILTVVLWLGYPILWAL) threads the bilayer. The Extracellular segment spans residues 101 to 109 (GSEGVALLS). Residues 110–131 (VGVTSWGYSGLDILAKYVFAFI) form a helical membrane-spanning segment. The residue at position 125 (lysine 125) is an N6-(retinylidene)lysine.

This sequence belongs to the archaeal/bacterial/fungal opsin family.

It localises to the cell membrane. Functionally, light-driven chloride pump. The sequence is that of Cruxhalorhodopsin-1 (choP1) from Haloarcula argentinensis.